The following is a 1798-amino-acid chain: MSEEIYSPEMKAYFESLQREIDRAYAIARKARAQGKDPSFDVEVPQATDMAGRVESLVGPPGVAERIRELVKEYGKEIAALKVVDEIIEGKFGDLGSKEKYAEQAVRTALAILTEGIVSAPLEGIADVKIKRNEWADGSEYLALYYAGPIRSSGGTAQALSVLVGDYVRRKLGLDRFKPSDEHIERMVEEVDLYHRAVTRLQYHPEADEVRLAMRNIPIEITGEETDKVEVSHRNVPGVETNHLRGGAILVLAEGVLQKAKKLVKYIDKMGIEGWDWIKEFVEAKEKGKSSEENKDESKAEDTGTESVAEKKENVEKGFYYELYEKFRANIAPNKKYTKEIIGGRPLFAEPSTNGGFRLRYGRSRVSGFATWSVNPATMLILDEFIAIGTQMKTERPGKGCIVTPATTVEGPIVRLKNGSVVRVDDYETALKVRNEVDEILYVGDALVNFGDFVENNQTLLPANYVEEWWVQELVQAIKDLYEVELQPFAENDREAVEEAAEYLEVDPDFLWNLLKDPLRVKPDVETAIHLSTVLDIPFHPYYTLYWNTLQPEEVEELQKALLGAQIEWAEFRKNRFAKKVVLENDKNIKRYLELLGLPHRLERVEKKRKVIVVEYPWSAALLTPLGNLEWEFKAKPFYTVIDIINENNRIKLRDRGISWIGARMGRPEKAKERKMKPPVQVLFPIGLAGGQSRDIKKAAEEGKTARVEIAFFKCPKCGHVGPEHLCPVCGTRKELLWHCPKCGADYPESDAKDFNYRCPKCDVELKPYAEREIKPADLLRQAMDNVKVYGIDRLKGVKGMTSGYKMAEPLEKGLLRVKNDVYVFKDGTIRFDATDAPITHFKPKEIGTSVEKLRELGYTHDFEGKPLERDDQILELKVQDVILPYEAGRYLLKVARFIDDLLEKFYGLPRFYNAEKMEDLVGHLVIGLAPHTSAGIIGRIIGFSDVLVGYAHPYYHAAKRRNCFPGDTRILVQINGLPQRITLRELYDLFEDERYENMAYVRKKPKADVKVYSFDPESGKVVLTDIEDVIKAPSTDHLIRFELELGRSFETTVDHPVLVYENGKFVEKRAFEVREGDRILVPNLKLPEKNIDYLDLLKEFSREEFAHLHDRIMVRGIAEWLRSVEADVKEDYLRRDSIPLSVLLRVLTEKEISIEEVPSCWLGFKRDKVRIKRFVPLKPLLRVVGYYLAEGYARESKSVYQLSFSMAEKEVREDLKRALREAFGDGFGIYERGGKVTVGSRILYLLFTEVLKAGKNAYSKRVPSLVFTLPREAVAEMLKAYFEGDGSALKSVPRVVAYSVNKALLEDIETLLLAKFGIRGYYTFDNNANRGNARGRLYHVERGTEAPVSKVYALNIAGEHYHRFFNSIGFVSERKNSIYELHAEKSPAQDRYSSQNGWLVKVRRIEYITPKDDFVFSLNAKKYHNVIINESIVTHQCDGDEDAVMLLLDALLNFSKYYLPEKRGGKMDAPLVVTTRLDPREVDSEVHNMDVVRYYPLEFYKATYELKSPKEVKVIERVEDRLGKPEMYEGIKFTHDTDDIGLGPKMSLYKQLGDMEEKVARQLALAERIRAVDEHHVAETIINSHLVPDLRGNLRSFTRQEFRCVKCNTKYRRPPLTGKCPKCGGKIVLTVSKGAIEKYLPTAKMLVTKYRVKDYTRQRICITEKDIKTLFENVFPEKQRTLMGFSADICEKMVKERTGHSNGKNGYLDEFNGKNGKASKKSGSLASKLSGKGKEPSKKKESAKPKRSEKVKNLTSFEAAAKNEQARGTAGNAKKAESEKPKRKKRKGISLDEFFGS.

Residues 286-309 (EKGKSSEENKDESKAEDTGTESVA) form a disordered region. Residues 1184–1319 (VVGYYLAEGY…ETLLLAKFGI (136 aa)) form the DOD-type homing endonuclease domain. The disordered stretch occupies residues 1699-1798 (TGHSNGKNGY…GISLDEFFGS (100 aa)). Low complexity predominate over residues 1714-1731 (GKNGKASKKSGSLASKLS). Basic and acidic residues predominate over residues 1733-1753 (KGKEPSKKKESAKPKRSEKVK).

The protein belongs to the archaeal DNA polymerase II family. As to quaternary structure, heterodimer of a large subunit and a small subunit. In terms of processing, this protein undergoes a protein self splicing that involves a post-translational excision of the intervening region (intein) followed by peptide ligation.

It catalyses the reaction DNA(n) + a 2'-deoxyribonucleoside 5'-triphosphate = DNA(n+1) + diphosphate. It carries out the reaction Exonucleolytic cleavage in the 3'- to 5'-direction to yield nucleoside 5'-phosphates.. Functionally, possesses two activities: a DNA synthesis (polymerase) and an exonucleolytic activity that degrades single-stranded DNA in the 3'- to 5'-direction. Has a template-primer preference which is characteristic of a replicative DNA polymerase. This is DNA polymerase II large subunit (polC) from Thermococcus kodakarensis (strain ATCC BAA-918 / JCM 12380 / KOD1) (Pyrococcus kodakaraensis (strain KOD1)).